The primary structure comprises 146 residues: Hemoglobin subunit beta (146 aa).

The Globin domain maps to H2–H146. Residues H63 and H92 each contribute to the heme b site.

This sequence belongs to the globin family. In terms of assembly, heterotetramer of two alpha chains and two beta chains. Red blood cells.

Its function is as follows. Involved in oxygen transport from the lung to the various peripheral tissues. The chain is Hemoglobin subunit beta (HBB) from Branta canadensis (Canada goose).